We begin with the raw amino-acid sequence, 290 residues long: Phosphonopyruvate hydrolase (290 aa).

Residue 40–44 (WGSGF) coordinates substrate. The active-site Nucleophile is the D54. D81 is a Mg(2+) binding site. Substrate-binding residues include R155, H186, and R188.

In terms of assembly, homodimer. Homotetramer. Requires Co(2+) as cofactor. It depends on Mg(2+) as a cofactor. The cofactor is Mn(2+).

It carries out the reaction 3-phosphonopyruvate + H2O = pyruvate + phosphate + H(+). Its activity is regulated as follows. Partially inhibited by EDTA. Activity is restored by Co(2+), and to a lesser extent by Ni(2+) and Mg(2+). Unaffected by Cs(2+) and Ca(2+). Activity is reduced by Mn(2+) and Cu(2+). Functionally, hydrolyzes phosphonopyruvate. Not active towards phosphoenolpyruvate, glycerophosphate, phospho-L-serine or phosphoglycolic acid. In Variovorax sp. (strain Pal2), this protein is Phosphonopyruvate hydrolase.